A 172-amino-acid chain; its full sequence is MNYFNVGKIVNTQGLQGEMRVLSVTDFAEERFKKGNTLALFDKKDQFVMDVEIASHRKVKNFDIIKFKGMYHINAIEKFRDFSLKVAEEDLSDLEEGEFYYHEIIGLEVYENDVLLGTIKEILQPGANDVWVVKRKGKRDLLLPYIPPVVLGIDIEQGRVDVEIPEGLDDEN.

Residues 96-168 (EGEFYYHEII…RVDVEIPEGL (73 aa)) form the PRC barrel domain.

This sequence belongs to the RimM family. In terms of assembly, binds ribosomal protein uS19.

It localises to the cytoplasm. In terms of biological role, an accessory protein needed during the final step in the assembly of 30S ribosomal subunit, possibly for assembly of the head region. Essential for efficient processing of 16S rRNA. May be needed both before and after RbfA during the maturation of 16S rRNA. It has affinity for free ribosomal 30S subunits but not for 70S ribosomes. The sequence is that of Ribosome maturation factor RimM from Streptococcus gordonii (strain Challis / ATCC 35105 / BCRC 15272 / CH1 / DL1 / V288).